Consider the following 177-residue polypeptide: Large ribosomal subunit protein uL10 (177 aa).

It belongs to the universal ribosomal protein uL10 family. In terms of assembly, part of the ribosomal stalk of the 50S ribosomal subunit. The N-terminus interacts with L11 and the large rRNA to form the base of the stalk. The C-terminus forms an elongated spine to which L12 dimers bind in a sequential fashion forming a multimeric L10(L12)X complex.

Forms part of the ribosomal stalk, playing a central role in the interaction of the ribosome with GTP-bound translation factors. The chain is Large ribosomal subunit protein uL10 from Thermoanaerobacter pseudethanolicus (strain ATCC 33223 / 39E) (Clostridium thermohydrosulfuricum).